The primary structure comprises 379 residues: UDP-4-amino-4-deoxy-L-arabinose--oxoglutarate aminotransferase (379 aa).

Residue Lys182 is modified to N6-(pyridoxal phosphate)lysine.

This sequence belongs to the DegT/DnrJ/EryC1 family. ArnB subfamily. In terms of assembly, homodimer. The cofactor is pyridoxal 5'-phosphate.

The enzyme catalyses UDP-4-amino-4-deoxy-beta-L-arabinose + 2-oxoglutarate = UDP-beta-L-threo-pentopyranos-4-ulose + L-glutamate. It functions in the pathway nucleotide-sugar biosynthesis; UDP-4-deoxy-4-formamido-beta-L-arabinose biosynthesis; UDP-4-deoxy-4-formamido-beta-L-arabinose from UDP-alpha-D-glucuronate: step 2/3. The protein operates within bacterial outer membrane biogenesis; lipopolysaccharide biosynthesis. Functionally, catalyzes the conversion of UDP-4-keto-arabinose (UDP-Ara4O) to UDP-4-amino-4-deoxy-L-arabinose (UDP-L-Ara4N). The modified arabinose is attached to lipid A and is required for resistance to polymyxin and cationic antimicrobial peptides. This chain is UDP-4-amino-4-deoxy-L-arabinose--oxoglutarate aminotransferase, found in Salmonella schwarzengrund (strain CVM19633).